The primary structure comprises 965 residues: SKI family transcriptional corepressor 1 (965 aa).

Disordered regions lie at residues Thr45–Leu72, Arg278–Ala367, Asp410–Ala458, Ser530–Val592, Ala615–Glu777, and Val796–Leu843. Composition is skewed to gly residues over residues Gln283–Cys312, Gly356–Ala367, and Glu418–Gly442. Residues Leu571–Ala586 show a composition bias toward pro residues. Over residues Pro620–Gly632 the composition is skewed to gly residues. Over residues Glu641–Ser650 the composition is skewed to polar residues. 2 stretches are compositionally biased toward acidic residues: residues Asp654–Val663 and Asp670–Glu679. Positions Glu800 to Pro823 are enriched in basic and acidic residues. A compositionally biased stretch (polar residues) spans Asp824–Asn835. Residues Glu858–Glu922 adopt a coiled-coil conformation.

Belongs to the SKI family. As to quaternary structure, interacts with LBX1. Interacts with SMAD1, SMAD2 and SMAD3. In terms of tissue distribution, present specifically in cerebellar Purkinje cells (at protein level).

Its subcellular location is the nucleus. Its function is as follows. Acts as a transcriptional corepressor of LBX1. Inhibits BMP signaling. This is SKI family transcriptional corepressor 1 (SKOR1) from Homo sapiens (Human).